Consider the following 147-residue polypeptide: Ras-related protein RabK2 (147 aa).

Residues Asn-11–Ser-15 and Thr-63–Asp-66 each bind GTP. The S-geranylgeranyl cysteine moiety is linked to residue Cys-145.

This sequence belongs to the small GTPase superfamily. Rab family.

The protein resides in the cell membrane. The chain is Ras-related protein RabK2 (rabK2) from Dictyostelium discoideum (Social amoeba).